The following is a 485-amino-acid chain: Trk system potassium uptake protein TrkH (485 aa).

At 1–2 the chain is on the cytoplasmic side; it reads MQ. The chain crosses the membrane as a helical span at residues 3 to 29; the sequence is FRSIIRIVGLLLALFSVTMLAPALVAL. Residues 30 to 35 are Periplasmic-facing; sequence LYRDGA. A helical membrane pass occupies residues 36 to 57; that stretch reads GVPFVTTFFVLLFCGAMCWFPN. Topologically, residues 58–65 are cytoplasmic; the sequence is RRHKHELK. The chain crosses the membrane as a helical span at residues 66 to 90; sequence SRDGFLIVVLFWTVLGSAGSLPFLI. Positions 98-109 form an intramembrane region, helical; Pore-forming; it reads VTDAFFESFSAL. An intramembrane segment occupies 110–115; sequence TTTGAT. Positions 110–115 are selectivity filter part 1; sequence TTTGAT. Residues T111 and T112 each contribute to the K(+) site. At 116 to 124 the chain is on the periplasmic side; the sequence is VIVGLDELP. A helical membrane pass occupies residues 125-150; the sequence is KAILFYRQFLQWFGGMGIIVLAVAIL. At 151-177 the chain is on the cytoplasmic side; it reads PVLGIGGMQLYRAEIPGPVKDTKMTPR. Residues 178–202 traverse the membrane as a helical segment; sequence IAETAKALWYIYLSLTIACAVAFWL. Residues 203 to 205 lie on the Periplasmic side of the membrane; it reads AGM. Residue T206 is an intramembrane region. The segment at residues 207-218 is an intramembrane region (helical; Pore-forming); sequence PFDAISHSFSTI. Residues 219 to 224 lie within the membrane without spanning it; that stretch reads AIGGFS. The segment at 219-224 is selectivity filter part 2; the sequence is AIGGFS. The K(+) site is built by I220 and G221. The Periplasmic portion of the chain corresponds to 225–234; sequence THDASMGYFD. Positions 235-250 form an intramembrane region, helical; the sequence is SYAINLITVVFLLISA. A helical transmembrane segment spans residues 276–296; it reads FRAFIFIQVLLFLVCFLLLLK. An intramembrane region (helical; Pore-forming) is located at residues 303-318; sequence PYDAFDQALFQTVSIS. The stretch at 319–324 is an intramembrane region; sequence TTAGFT. The tract at residues 319–324 is selectivity filter part 3; the sequence is TTAGFT. Positions 320 and 321 each coordinate K(+). Topologically, residues 325–332 are periplasmic; the sequence is TTGFADWP. Positions 333–344 form an intramembrane region, helical; sequence LFLPVLLLFSSF. Positions 345–357 form an intramembrane region, note=Loop between two helices; sequence IGGCAGSTGGGMK. A helical membrane pass occupies residues 392–419; sequence PQRVVDAVWGFFSAYALVFVVCMLGLIA. Residues 420–421 are Periplasmic-facing; it reads TG. The stretch at 422–423 is an intramembrane region; sequence MD. The helical; Pore-forming intramembrane region spans 424–434; that stretch reads ELSAFSAVAAT. Residues 435 to 441 lie within the membrane without spanning it; the sequence is LNNLGPG. A selectivity filter part 4 region spans residues 436 to 441; sequence NNLGPG. The K(+) site is built by N437 and L438. Topologically, residues 442-453 are periplasmic; sequence LGEVALHFGDVN. The segment at residues 454 to 465 is an intramembrane region (helical); the sequence is DKAKWVLIVSML.

It belongs to the TrkH potassium transport family. Homodimer.

The protein resides in the cell inner membrane. In terms of biological role, low-affinity potassium transport system. Interacts with trk system potassium uptake protein TrkA and requires TrkE for transport activity. Selective for permeation of potassium ion and rubidium ion over smaller ions such as natrium or litium. The protein is Trk system potassium uptake protein TrkH of Vibrio parahaemolyticus serotype O3:K6 (strain RIMD 2210633).